The following is a 1226-amino-acid chain: Chromosome partition protein Smc (1226 aa).

32 to 39 is an ATP binding site; that stretch reads PNGCGKSN. Coiled coils occupy residues 173 to 231 and 269 to 491; these read ITKF…IKRN and NSLE…SKSL. Positions 527 to 635 constitute an SMC hinge domain; it reads YQLLGNLIQC…FDGYFIASKF (109 aa). Coiled coils occupy residues 679 to 741, 775 to 965, and 1006 to 1078; these read QGVV…AAKK, MLES…LREA, and HRRY…KSKE.

The protein belongs to the SMC family. In terms of assembly, homodimer.

It is found in the cytoplasm. In terms of biological role, required for chromosome condensation and partitioning. This Halobacteriovorax marinus (strain ATCC BAA-682 / DSM 15412 / SJ) (Bacteriovorax marinus) protein is Chromosome partition protein Smc.